Reading from the N-terminus, the 1273-residue chain is DNA-directed RNA polymerase subunit beta (1273 aa).

This sequence belongs to the RNA polymerase beta chain family. As to quaternary structure, the RNAP catalytic core consists of 2 alpha, 1 beta, 1 beta' and 1 omega subunit. When a sigma factor is associated with the core the holoenzyme is formed, which can initiate transcription.

The enzyme catalyses RNA(n) + a ribonucleoside 5'-triphosphate = RNA(n+1) + diphosphate. Its function is as follows. DNA-dependent RNA polymerase catalyzes the transcription of DNA into RNA using the four ribonucleoside triphosphates as substrates. This Onion yellows phytoplasma (strain OY-M) protein is DNA-directed RNA polymerase subunit beta.